The chain runs to 84 residues: MSSGGLLLLLGLLTLWAELTPISGHDRPTFCNLAPESGRCRGHLRRIYYNLESNKCKVFFYGGCGGNANNFETRDECRQTCGGK.

The signal sequence occupies residues 1 to 24 (MSSGGLLLLLGLLTLWAELTPISG). A BPTI/Kunitz inhibitor domain is found at 31–81 (CNLAPESGRCRGHLRRIYYNLESNKCKVFFYGGCGGNANNFETRDECRQTC). Disulfide bonds link cysteine 31/cysteine 81, cysteine 40/cysteine 64, and cysteine 56/cysteine 77.

The protein belongs to the venom Kunitz-type family. In terms of tissue distribution, expressed by the venom gland.

The protein resides in the secreted. Serine protease inhibitor. The chain is Kunitz-type serine protease inhibitor 1 from Daboia russelii (Russel's viper).